The sequence spans 460 residues: Ribosomal protein uS12 methylthiotransferase RimO (460 aa).

An MTTase N-terminal domain is found at 9–119; that stretch reads PKVGFVSLGC…VMEAVHAALP (111 aa). Positions 18, 54, 83, 150, 154, and 157 each coordinate [4Fe-4S] cluster. Residues 136 to 374 enclose the Radical SAM core domain; the sequence is LTPRHYAYLK…AKQAEISALR (239 aa). One can recognise a TRAM domain in the interval 376–444; it reads EAKIGSVQQC…EHDLFGDALP (69 aa).

The protein belongs to the methylthiotransferase family. RimO subfamily. [4Fe-4S] cluster serves as cofactor.

It localises to the cytoplasm. It carries out the reaction L-aspartate(89)-[ribosomal protein uS12]-hydrogen + (sulfur carrier)-SH + AH2 + 2 S-adenosyl-L-methionine = 3-methylsulfanyl-L-aspartate(89)-[ribosomal protein uS12]-hydrogen + (sulfur carrier)-H + 5'-deoxyadenosine + L-methionine + A + S-adenosyl-L-homocysteine + 2 H(+). Catalyzes the methylthiolation of an aspartic acid residue of ribosomal protein uS12. This is Ribosomal protein uS12 methylthiotransferase RimO from Xanthomonas oryzae pv. oryzae (strain PXO99A).